The chain runs to 54 residues: ATP synthase protein 8 (54 aa).

The chain crosses the membrane as a helical span at residues 9-29 (WIINFFIVWTADFTLLIVLSI).

It belongs to the ATPase protein 8 family. In terms of assembly, F-type ATPases have 2 components, CF(1) - the catalytic core - and CF(0) - the membrane proton channel.

It is found in the mitochondrion membrane. Mitochondrial membrane ATP synthase (F(1)F(0) ATP synthase or Complex V) produces ATP from ADP in the presence of a proton gradient across the membrane which is generated by electron transport complexes of the respiratory chain. F-type ATPases consist of two structural domains, F(1) - containing the extramembraneous catalytic core and F(0) - containing the membrane proton channel, linked together by a central stalk and a peripheral stalk. During catalysis, ATP synthesis in the catalytic domain of F(1) is coupled via a rotary mechanism of the central stalk subunits to proton translocation. Part of the complex F(0) domain. Minor subunit located with subunit a in the membrane. This Arbacia lixula (Black urchin) protein is ATP synthase protein 8 (MT-ATP8).